Reading from the N-terminus, the 257-residue chain is Phosphonates import ATP-binding protein PhnC (257 aa).

In terms of domain architecture, ABC transporter spans 2 to 246 (IEFRNVSKVY…KFAEIYGDVA (245 aa)). 35–42 (GLSGAGKS) provides a ligand contact to ATP.

Belongs to the ABC transporter superfamily. Phosphonates importer (TC 3.A.1.9.1) family. As to quaternary structure, the complex is composed of two ATP-binding proteins (PhnC), two transmembrane proteins (PhnE) and a solute-binding protein (PhnD).

It localises to the cell membrane. It carries out the reaction phosphonate(out) + ATP + H2O = phosphonate(in) + ADP + phosphate + H(+). Functionally, part of the ABC transporter complex PhnCDE involved in phosphonates import. Responsible for energy coupling to the transport system. The sequence is that of Phosphonates import ATP-binding protein PhnC from Bacillus cereus (strain ATCC 10987 / NRS 248).